A 345-amino-acid chain; its full sequence is D-fructose 1,6-bisphosphatase class 2/sedoheptulose 1,7-bisphosphatase (345 aa).

Positions 33, 57, 97, and 100 each coordinate Mn(2+). Substrate contacts are provided by residues 100-102, Tyr-131, 176-178, and 198-200; these read EGT, RPR, and DGD. Glu-225 lines the Mn(2+) pocket.

This sequence belongs to the FBPase class 2 family. Homotetramer. Mn(2+) is required as a cofactor.

The catalysed reaction is beta-D-fructose 1,6-bisphosphate + H2O = beta-D-fructose 6-phosphate + phosphate. The enzyme catalyses D-sedoheptulose 1,7-bisphosphate + H2O = D-sedoheptulose 7-phosphate + phosphate. Its pathway is carbohydrate biosynthesis; Calvin cycle. Functionally, catalyzes the hydrolysis of fructose 1,6-bisphosphate (Fru 1,6-P2) and sedoheptulose 1,7-bisphosphate (Sed 1,7-P2) to fructose 6-phosphate and sedoheptulose 7-phosphate, respectively. This is D-fructose 1,6-bisphosphatase class 2/sedoheptulose 1,7-bisphosphatase from Trichodesmium erythraeum (strain IMS101).